Reading from the N-terminus, the 148-residue chain is MLVKTTHFGEINIKDEDIIEFSEGIVGFEDIHRYGIIRNQNSDSPFSWLQAVEKSELAFAVVDPFVIKKDYDFVLSDEYVKALDINDPSQVNVYAIVVVPDDLTKISMNLKAPVIVNKDNRKAAQVILDTDEYTVRHYIMDELQKQEV.

It belongs to the FliW family. In terms of assembly, interacts with translational regulator CsrA and flagellin(s).

It localises to the cytoplasm. In terms of biological role, acts as an anti-CsrA protein, binds CsrA and prevents it from repressing translation of its target genes, one of which is flagellin. Binds to flagellin and participates in the assembly of the flagellum. This Ruminiclostridium cellulolyticum (strain ATCC 35319 / DSM 5812 / JCM 6584 / H10) (Clostridium cellulolyticum) protein is Flagellar assembly factor FliW.